The chain runs to 251 residues: MKILVAVKRVVDYAVKIRVKPDKTGVETQNVKMSMNPFCEIALEEALRIKEAGFAKEVIAVSIGPSQCVDTLRTGLAMGADRGIHVETNSIFLPLTIAKILKSLADVENPGLIFLGKQAIDDDCNQTGQMVAALLGWPQATFASKVVLDKDKNVATVDREVDGGLETLNVDLPAVITTDLRLNQPRYASLPNIMKAKSKPIKKMTVQDLKVDIKSDIEILEVTEPPKRKSGVMVSSVDELIDKLKNEAHVV.

The protein belongs to the ETF beta-subunit/FixA family. In terms of assembly, heterodimer of an alpha and a beta subunit. FAD is required as a cofactor. AMP serves as cofactor.

The protein resides in the mitochondrion matrix. Its function is as follows. The electron transfer flavoprotein serves as a specific electron acceptor for several dehydrogenases, including five acyl-CoA dehydrogenases, glutaryl-CoA and sarcosine dehydrogenase. It transfers the electrons to the main mitochondrial respiratory chain via ETF-ubiquinone oxidoreductase (ETF dehydrogenase). Involved in leucine catabolism and in phytol degradation. The sequence is that of Electron transfer flavoprotein subunit beta, mitochondrial (ETFB) from Arabidopsis thaliana (Mouse-ear cress).